We begin with the raw amino-acid sequence, 176 residues long: MKQFLDFLPLVVFFIVYNLYDIYYASGALIVASALVLVYTWLRYRKVEKVALITFVLVAIFGSLTLYYHNAEFIKWKVTVIYSLFAAALLISQFVFGKPLIQRMLDKEIHLPARVWNNLNIAWALFFLACGAANIYIAFWLPQSVWVNFKVFGLTGLTLVFTLLSGIYIYRYNNTH.

5 helical membrane passes run 22–42 (IYYA…YTWL), 50–70 (VALI…YYHN), 81–101 (IYSL…KPLI), 121–141 (IAWA…AFWL), and 149–169 (FKVF…GIYI).

The protein belongs to the YciB family.

It is found in the cell inner membrane. Functionally, plays a role in cell envelope biogenesis, maintenance of cell envelope integrity and membrane homeostasis. This is Inner membrane-spanning protein YciB from Sodalis glossinidius (strain morsitans).